A 444-amino-acid polypeptide reads, in one-letter code: Glutamyl-tRNA(Gln) amidotransferase subunit D (444 aa).

The Asparaginase/glutaminase domain maps to 92-424 (SEIKIISTGG…EKIQNLMITN (333 aa)). Residues Thr102, Thr178, Asp179, and Lys257 contribute to the active site.

The protein belongs to the asparaginase 1 family. GatD subfamily. As to quaternary structure, heterodimer of GatD and GatE.

It catalyses the reaction L-glutamyl-tRNA(Gln) + L-glutamine + ATP + H2O = L-glutaminyl-tRNA(Gln) + L-glutamate + ADP + phosphate + H(+). Functionally, allows the formation of correctly charged Gln-tRNA(Gln) through the transamidation of misacylated Glu-tRNA(Gln) in organisms which lack glutaminyl-tRNA synthetase. The reaction takes place in the presence of glutamine and ATP through an activated gamma-phospho-Glu-tRNA(Gln). The GatDE system is specific for glutamate and does not act on aspartate. This chain is Glutamyl-tRNA(Gln) amidotransferase subunit D, found in Saccharolobus solfataricus (strain ATCC 35092 / DSM 1617 / JCM 11322 / P2) (Sulfolobus solfataricus).